A 67-amino-acid polypeptide reads, in one-letter code: Neurotoxin Cex10 (67 aa).

One can recognise an LCN-type CS-alpha/beta domain in the interval lysine 1–glycine 65. 4 cysteine pairs are disulfide-bonded: cysteine 11–cysteine 64, cysteine 15–cysteine 40, cysteine 24–cysteine 45, and cysteine 28–cysteine 47. Cysteine 64 carries the cysteine amide modification. Residues glycine 65–lysine 67 constitute a propeptide that is removed on maturation.

This sequence belongs to the long (4 C-C) scorpion toxin superfamily. Sodium channel inhibitor family. Beta subfamily. Expressed by the venom gland.

The protein localises to the secreted. In terms of biological role, beta toxins bind voltage-independently at site-4 of sodium channels (Nav) and shift the voltage of activation toward more negative potentials thereby affecting sodium channel activation and promoting spontaneous and repetitive firing. The chain is Neurotoxin Cex10 from Centruroides exilicauda (Bark scorpion).